A 256-amino-acid polypeptide reads, in one-letter code: 1-(5-phosphoribosyl)-5-[(5-phosphoribosylamino)methylideneamino] imidazole-4-carboxamide isomerase (256 aa).

Aspartate 8 acts as the Proton acceptor in catalysis. Aspartate 130 functions as the Proton donor in the catalytic mechanism.

This sequence belongs to the HisA/HisF family.

The protein localises to the cytoplasm. It catalyses the reaction 1-(5-phospho-beta-D-ribosyl)-5-[(5-phospho-beta-D-ribosylamino)methylideneamino]imidazole-4-carboxamide = 5-[(5-phospho-1-deoxy-D-ribulos-1-ylimino)methylamino]-1-(5-phospho-beta-D-ribosyl)imidazole-4-carboxamide. Its pathway is amino-acid biosynthesis; L-histidine biosynthesis; L-histidine from 5-phospho-alpha-D-ribose 1-diphosphate: step 4/9. The sequence is that of 1-(5-phosphoribosyl)-5-[(5-phosphoribosylamino)methylideneamino] imidazole-4-carboxamide isomerase from Chlorobium phaeobacteroides (strain DSM 266 / SMG 266 / 2430).